The following is a 344-amino-acid chain: Arginine N-succinyltransferase (344 aa).

Leucine 125 provides a ligand contact to succinyl-CoA. Histidine 229 functions as the Proton donor in the catalytic mechanism.

Belongs to the arginine N-succinyltransferase family.

The enzyme catalyses succinyl-CoA + L-arginine = N(2)-succinyl-L-arginine + CoA + H(+). It participates in amino-acid degradation; L-arginine degradation via AST pathway; L-glutamate and succinate from L-arginine: step 1/5. In terms of biological role, catalyzes the transfer of succinyl-CoA to arginine to produce N(2)-succinylarginine. This is Arginine N-succinyltransferase from Escherichia coli O127:H6 (strain E2348/69 / EPEC).